The primary structure comprises 148 residues: Snaclec B2 (148 aa).

Residues 1-24 (MGRLISVSFGLLVVFLSLSGTGAA) form the signal peptide. Cystine bridges form between Cys27-Cys38, Cys55-Cys144, and Cys121-Cys136. Residues 34–145 (YDQHCYKVFD…CRLLGHFVCK (112 aa)) form the C-type lectin domain.

It belongs to the snaclec family. As to quaternary structure, heterodimer; disulfide-linked. Expressed by the venom gland.

It localises to the secreted. In terms of biological role, interferes with one step of hemostasis (modulation of platelet aggregation, or coagulation cascade, for example). The polypeptide is Snaclec B2 (Macrovipera lebetinus (Levantine viper)).